We begin with the raw amino-acid sequence, 311 residues long: Pyrimidine-specific ribonucleoside hydrolase RihA (311 aa).

The active site involves histidine 240.

This sequence belongs to the IUNH family. RihA subfamily.

Hydrolyzes cytidine or uridine to ribose and cytosine or uracil, respectively. The chain is Pyrimidine-specific ribonucleoside hydrolase RihA from Shigella flexneri serotype 5b (strain 8401).